The following is a 365-amino-acid chain: Caffeic acid 3-O-methyltransferase (365 aa).

Position 133 (asparagine 133) interacts with (E)-ferulate. S-adenosyl-L-homocysteine-binding residues include glycine 210, aspartate 233, aspartate 253, methionine 254, methionine 266, and lysine 267. Histidine 271 serves as the catalytic Proton acceptor. Residue aspartate 272 participates in (E)-5-hydroxyferulate binding.

Belongs to the class I-like SAM-binding methyltransferase superfamily. Cation-independent O-methyltransferase family. COMT subfamily. As to quaternary structure, homodimer.

The catalysed reaction is (E)-caffeate + S-adenosyl-L-methionine = (E)-ferulate + S-adenosyl-L-homocysteine + H(+). The enzyme catalyses (E)-5-hydroxyferulate + S-adenosyl-L-methionine = (E)-sinapate + S-adenosyl-L-homocysteine + H(+). It participates in aromatic compound metabolism; phenylpropanoid biosynthesis. Its activity is regulated as follows. Inhibited by Cu(2+), and to a lesser extent by Ni(2+), Mn(2+), Co(2+), Fe(3+) and Zn(2+). Unaffected by Fe(2+) and Mg(2+). In terms of biological role, catalyzes the conversion of caffeic acid to ferulic acid and of 5-hydroxyferulic acid to sinapic acid. The resulting products may subsequently be converted to the corresponding alcohols that are incorporated into lignins. In Ammi majus (Bishop's weed), this protein is Caffeic acid 3-O-methyltransferase.